The primary structure comprises 234 residues: 2-phospho-L-lactate guanylyltransferase (234 aa).

This sequence belongs to the CofC family. In terms of assembly, homodimer.

The catalysed reaction is (2S)-2-phospholactate + GTP + H(+) = (2S)-lactyl-2-diphospho-5'-guanosine + diphosphate. It participates in cofactor biosynthesis; coenzyme F420 biosynthesis. In terms of biological role, guanylyltransferase that catalyzes the activation of (2S)-2-phospholactate (2-PL) as (2S)-lactyl-2-diphospho-5'-guanosine, via the condensation of 2-PL with GTP. It is involved in the biosynthesis of coenzyme F420, a hydride carrier cofactor. The protein is 2-phospho-L-lactate guanylyltransferase of Methanobrevibacter ruminantium (strain ATCC 35063 / DSM 1093 / JCM 13430 / OCM 146 / M1) (Methanobacterium ruminantium).